Reading from the N-terminus, the 208-residue chain is Potassium-transporting ATPase KdpC subunit (208 aa).

A helical transmembrane segment spans residues P6–L26.

The protein belongs to the KdpC family. As to quaternary structure, the system is composed of three essential subunits: KdpA, KdpB and KdpC.

Its subcellular location is the cell membrane. Functionally, part of the high-affinity ATP-driven potassium transport (or Kdp) system, which catalyzes the hydrolysis of ATP coupled with the electrogenic transport of potassium into the cytoplasm. This subunit acts as a catalytic chaperone that increases the ATP-binding affinity of the ATP-hydrolyzing subunit KdpB by the formation of a transient KdpB/KdpC/ATP ternary complex. The protein is Potassium-transporting ATPase KdpC subunit of Clostridioides difficile (strain 630) (Peptoclostridium difficile).